Reading from the N-terminus, the 225-residue chain is Uracil-DNA glycosylase (225 aa).

The active-site Proton acceptor is Asp-65.

It belongs to the uracil-DNA glycosylase (UDG) superfamily. UNG family.

The protein localises to the cytoplasm. It catalyses the reaction Hydrolyzes single-stranded DNA or mismatched double-stranded DNA and polynucleotides, releasing free uracil.. In terms of biological role, excises uracil residues from the DNA which can arise as a result of misincorporation of dUMP residues by DNA polymerase or due to deamination of cytosine. This is Uracil-DNA glycosylase from Bacillus thuringiensis subsp. konkukian (strain 97-27).